The sequence spans 128 residues: Ribonuclease P protein component 4 (128 aa).

Cysteine 63, cysteine 66, cysteine 92, and cysteine 95 together coordinate Zn(2+).

It belongs to the eukaryotic/archaeal RNase P protein component 4 family. In terms of assembly, consists of a catalytic RNA component and at least 4 protein subunits. Forms a subcomplex with Rnp1 which stimulates the catalytic RNA. Requires Zn(2+) as cofactor.

The protein resides in the cytoplasm. The catalysed reaction is Endonucleolytic cleavage of RNA, removing 5'-extranucleotides from tRNA precursor.. Part of ribonuclease P, a protein complex that generates mature tRNA molecules by cleaving their 5'-ends. This chain is Ribonuclease P protein component 4, found in Methanocaldococcus jannaschii (strain ATCC 43067 / DSM 2661 / JAL-1 / JCM 10045 / NBRC 100440) (Methanococcus jannaschii).